We begin with the raw amino-acid sequence, 404 residues long: Probable thioredoxin reductase ARB_06224 (404 aa).

The first 22 residues, 1–22 (MGVQRLALALIAFTSALTSVIA), serve as a signal peptide directing secretion. 67-75 (DEGIYRNGA) serves as a coordination point for FAD. Residues C172 and C175 are joined by a disulfide bond. An N-linked (GlcNAc...) asparagine glycan is attached at N213. Position 334–343 (334–343 (DANNDGSTNG)) interacts with FAD.

This sequence belongs to the class-II pyridine nucleotide-disulfide oxidoreductase family. As to quaternary structure, homodimer. Requires FAD as cofactor.

Its subcellular location is the secreted. The catalysed reaction is [thioredoxin]-dithiol + NADP(+) = [thioredoxin]-disulfide + NADPH + H(+). In Arthroderma benhamiae (strain ATCC MYA-4681 / CBS 112371) (Trichophyton mentagrophytes), this protein is Probable thioredoxin reductase ARB_06224.